Reading from the N-terminus, the 216-residue chain is Transmembrane protein 186 (216 aa).

Over Met1–Leu68 the chain is Mitochondrial matrix. A helical membrane pass occupies residues Gly69 to Tyr91. At Cys92–Leu103 the chain is on the mitochondrial intermembrane side. The helical transmembrane segment at Gly104–Phe124 threads the bilayer. Residues Arg125–Lys216 lie on the Mitochondrial matrix side of the membrane.

Belongs to the TMEM186 family. As to quaternary structure, part of the mitochondrial complex I assembly/MCIA complex that comprises at least the core subunits TMEM126B, NDUFAF1, ECSIT and ACAD9 and complement subunits such as COA1 and TMEM186. Interacts with MT-ND3.

Its subcellular location is the mitochondrion inner membrane. In terms of biological role, as part of the MCIA complex, required for efficient assembly of the mitochondrial complex I. The sequence is that of Transmembrane protein 186 from Rattus norvegicus (Rat).